The following is a 71-amino-acid chain: MKTAIFTVVLALAVFAVLCLVVSTHAERHSKTDMEDSPMIQERKGLPPGKPCYGATQKIPCCGVCSHNNCT.

Residues 1–26 form the signal peptide; sequence MKTAIFTVVLALAVFAVLCLVVSTHA. A propeptide spanning residues 27–43 is cleaved from the precursor; sequence ERHSKTDMEDSPMIQER. 2 cysteine pairs are disulfide-bonded: Cys52–Cys65 and Cys61–Cys70.

Belongs to the neurotoxin 36 family. 02 subfamily. In terms of tissue distribution, expressed by the venom gland.

The protein resides in the secreted. Functionally, reversibly blocks N-type calcium channels (Cav2.2/CACNA1B) in rat dorsal root ganglion cells. Elicits no toxic symptoms in either vertebrates or invertebrates during a period of 48 hours post-injection, when it was assayed in vivo by direct injection into mice and cockroaches. This is Hainantoxin-X-2 from Cyriopagopus hainanus (Chinese bird spider).